The chain runs to 402 residues: Endo-polygalacturonase (402 aa).

The first 23 residues, 1–23, serve as a signal peptide directing secretion; sequence MEYQSGKRVLSLSLGLIGLFSAS. 2 cysteine pairs are disulfide-bonded: C41/C62 and C115/C125. Residue D249 is the Proton donor of the active site. The active site involves H277.

This sequence belongs to the glycosyl hydrolase 28 family. As to quaternary structure, monomer.

The protein resides in the secreted. It catalyses the reaction (1,4-alpha-D-galacturonosyl)n+m + H2O = (1,4-alpha-D-galacturonosyl)n + (1,4-alpha-D-galacturonosyl)m.. In terms of biological role, involved in maceration and soft-rotting of plant tissue. This is Endo-polygalacturonase (pehA) from Pectobacterium parmentieri.